Consider the following 88-residue polypeptide: MKKGIHPENYREVLFYDGSVQQGWIIRSCAATNKTMVWEDGKEYPLYPLDTSSASHPVYTGKRREANTEGRASKFNERFKGISSLTKK.

The protein belongs to the bacterial ribosomal protein bL31 family. Type B subfamily. As to quaternary structure, part of the 50S ribosomal subunit.

The polypeptide is Large ribosomal subunit protein bL31B (Glaesserella parasuis serovar 5 (strain SH0165) (Haemophilus parasuis)).